The following is a 586-amino-acid chain: Phosphomethylpyrimidine synthase (586 aa).

The tract at residues 1–58 is disordered; it reads MKQSVSAEQIELKSSLPGSKKVYVDGTREGMKVPMREIEQSDTNGVQNPPIRVYDTSG. The span at 22-39 shows a compositional bias: basic and acidic residues; that stretch reads VYVDGTREGMKVPMREIE. Residues N193, M222, Y251, H287, 307-309, 348-351, and E387 contribute to the substrate site; these read SRG and DGLR. H391 contributes to the Zn(2+) binding site. Y414 is a binding site for substrate. H455 is a binding site for Zn(2+). [4Fe-4S] cluster-binding residues include C535, C538, and C543.

Belongs to the ThiC family. [4Fe-4S] cluster serves as cofactor.

The catalysed reaction is 5-amino-1-(5-phospho-beta-D-ribosyl)imidazole + S-adenosyl-L-methionine = 4-amino-2-methyl-5-(phosphooxymethyl)pyrimidine + CO + 5'-deoxyadenosine + formate + L-methionine + 3 H(+). The protein operates within cofactor biosynthesis; thiamine diphosphate biosynthesis. Functionally, catalyzes the synthesis of the hydroxymethylpyrimidine phosphate (HMP-P) moiety of thiamine from aminoimidazole ribotide (AIR) in a radical S-adenosyl-L-methionine (SAM)-dependent reaction. The protein is Phosphomethylpyrimidine synthase of Bacillus mycoides (strain KBAB4) (Bacillus weihenstephanensis).